The following is a 221-amino-acid chain: GTP-binding nuclear protein Ran2 (221 aa).

A Small GTPase Ran-type domain is found at 10 to 174 (DYPSFKLVIV…LYLARKLAGD (165 aa)). 21 to 28 (DGGTGKTT) lines the GTP pocket. A switch-I region spans residues 40-48 (KKYEPTIGV). Residues Gly-71, 125–128 (NKVD), and 153–155 (SAK) each bind GTP. A switch-II region spans residues 71–87 (GQEKFGGLRDGYYIHGQ).

The protein belongs to the small GTPase superfamily. Ran family. As to quaternary structure, found in a nuclear export complex with RanGTP, exportin and pre-miRNA.

Its subcellular location is the nucleus. GTP-binding protein involved in nucleocytoplasmic transport. Required for the import of protein into the nucleus and also for RNA export. Involved in chromatin condensation and control of cell cycle. The sequence is that of GTP-binding nuclear protein Ran2 (RAN2) from Solanum lycopersicum (Tomato).